We begin with the raw amino-acid sequence, 172 residues long: Large ribosomal subunit protein eL20A (172 aa).

Ser32 is modified (phosphoserine). Glycyl lysine isopeptide (Lys-Gly) (interchain with G-Cter in ubiquitin) cross-links involve residues Lys125, Lys131, and Lys149.

It belongs to the eukaryotic ribosomal protein eL20 family. In terms of assembly, component of the large ribosomal subunit (LSU). Mature yeast ribosomes consist of a small (40S) and a large (60S) subunit. The 40S small subunit contains 1 molecule of ribosomal RNA (18S rRNA) and 33 different proteins (encoded by 57 genes). The large 60S subunit contains 3 rRNA molecules (25S, 5.8S and 5S rRNA) and 46 different proteins (encoded by 81 genes). eL20 forms multiple interactions with RNA and proteins in the central protuberance, connecting components of core functional centers that are located far apart.

It localises to the cytoplasm. Component of the ribosome, a large ribonucleoprotein complex responsible for the synthesis of proteins in the cell. The small ribosomal subunit (SSU) binds messenger RNAs (mRNAs) and translates the encoded message by selecting cognate aminoacyl-transfer RNA (tRNA) molecules. The large subunit (LSU) contains the ribosomal catalytic site termed the peptidyl transferase center (PTC), which catalyzes the formation of peptide bonds, thereby polymerizing the amino acids delivered by tRNAs into a polypeptide chain. The nascent polypeptides leave the ribosome through a tunnel in the LSU and interact with protein factors that function in enzymatic processing, targeting, and the membrane insertion of nascent chains at the exit of the ribosomal tunnel. The sequence is that of Large ribosomal subunit protein eL20A from Saccharomyces cerevisiae (strain ATCC 204508 / S288c) (Baker's yeast).